Reading from the N-terminus, the 30-residue chain is Antibacterial 6.5 kDa protein (30 aa).

Residues 1–21 (XXVPYPRPFPRPPIGPRPLPF) are compositionally biased toward pro residues. The tract at residues 1–30 (XXVPYPRPFPRPPIGPRPLPFPGGGRPFQS) is disordered.

The protein to bovine bactenecin 7.

Functionally, strong antimicrobial activity against P.immobilis and M.luteus, less active against E.coli D22. This chain is Antibacterial 6.5 kDa protein, found in Carcinus maenas (Common shore crab).